Consider the following 346-residue polypeptide: NADH-ubiquinone oxidoreductase chain 2 (346 aa).

9 consecutive transmembrane segments (helical) span residues 7–27 (AIIT…NHWI), 59–79 (YFLT…MNMW), 93–115 (ISCT…HFWF), 151–171 (TTLL…GGLN), 178–198 (IMAF…TLSP), 200–220 (ILLL…LMIN), 242–262 (TMML…GFAP), 275–294 (LSMF…YFYL), and 325–345 (LATI…LKAI).

The protein belongs to the complex I subunit 2 family.

The protein localises to the mitochondrion inner membrane. It carries out the reaction a ubiquinone + NADH + 5 H(+)(in) = a ubiquinol + NAD(+) + 4 H(+)(out). Functionally, core subunit of the mitochondrial membrane respiratory chain NADH dehydrogenase (Complex I) that is believed to belong to the minimal assembly required for catalysis. Complex I functions in the transfer of electrons from NADH to the respiratory chain. The immediate electron acceptor for the enzyme is believed to be ubiquinone. The chain is NADH-ubiquinone oxidoreductase chain 2 (MT-ND2) from Pelomedusa subrufa (African side-necked turtle).